An 895-amino-acid polypeptide reads, in one-letter code: DNA mismatch repair protein MutS (895 aa).

Glycine 607–serine 614 is an ATP binding site.

The protein belongs to the DNA mismatch repair MutS family.

This protein is involved in the repair of mismatches in DNA. It is possible that it carries out the mismatch recognition step. This protein has a weak ATPase activity. The sequence is that of DNA mismatch repair protein MutS from Bacillus cytotoxicus (strain DSM 22905 / CIP 110041 / 391-98 / NVH 391-98).